The chain runs to 236 residues: Orotidine 5'-phosphate decarboxylase (236 aa).

Substrate-binding positions include aspartate 17, lysine 39, 66 to 75 (DLKFHDIPNT), threonine 125, arginine 186, glutamine 195, glycine 215, and arginine 216. Lysine 68 acts as the Proton donor in catalysis.

This sequence belongs to the OMP decarboxylase family. Type 1 subfamily. In terms of assembly, homodimer.

It catalyses the reaction orotidine 5'-phosphate + H(+) = UMP + CO2. It functions in the pathway pyrimidine metabolism; UMP biosynthesis via de novo pathway; UMP from orotate: step 2/2. Catalyzes the decarboxylation of orotidine 5'-monophosphate (OMP) to uridine 5'-monophosphate (UMP). The protein is Orotidine 5'-phosphate decarboxylase of Buchnera aphidicola subsp. Acyrthosiphon pisum (strain APS) (Acyrthosiphon pisum symbiotic bacterium).